The following is a 480-amino-acid chain: MYQISLKATKSAAEPTSSTDASHDDRQVERDSYDTAMLRFISDMELSSMYAEKTSPYPILMPRSFLEDLKNFQDLLFVAVSNILDRWWEDREADFPRRMPLEPHEESVLKHYNERPLHWRPDMLLPAAGDPNTNLPFKICEINARSPFNSMIKSICMFQAAAASKTALPDGLELASTADSLVDSLVSLFNPDLPLHVIWHEGITDPIDAFSSFYKKRTGKIPRVIRATDLRLAPDSSSPTGRILCCVASAASADHSNGQAIVSETGEPLERIYQVGLQMSHRDYSELSSEVLQQLAVDGICDLRNIFLVSDKRMLGVIWQELDSLVHKHHVLTAEQAEILRQGIVHTILPGSEDMERLLRQTREGSVSKDSYLLKPARGHRGMGILLGKDLGQEEFEGLLEELADPLLPADRRYVVQPFIEQALFGLRLYDDSEPQQCQMTGTYHAIGGCFAGLGVWRADSERICSRFHGAFSIPAIVPR.

The disordered stretch occupies residues 1-30; sequence MYQISLKATKSAAEPTSSTDASHDDRQVER. A compositionally biased stretch (basic and acidic residues) spans 21–30; it reads ASHDDRQVER.

The catalysed reaction is NK13650 D + L-aspartate + ATP = NK13650 C + AMP + diphosphate + H(+). It catalyses the reaction NK13650 B + L-aspartate + ATP = NK13650 A + AMP + diphosphate + H(+). The protein operates within secondary metabolite biosynthesis. In terms of biological role, ATP-grasp enzyme; part of the ank cluster that mediates the biosynthesis of NK13650 C, a highly modified cyclo-arginine-tyrosine dipeptide. AnkG catalyzes the last step of the pathway via amidation NK13650 D with L-Asp to produce NK13650 C. AnkG also amidates NK13650 B into NK13650 A. Within the pathway, the cyclodipeptide synthase ankA acts as the scaffold-generating enzyme and is responsible for formation of the cyclo-Arg-Tyr diketopiperazine (cRY) from L-Arg and L-Tyr. The ankA product cRY is desaturated by the cytochrome P450 monooxygenase ankB to yield a dehydro-cyclodipeptide intermediate. The FAD-dependent monooxygenase ankC then installs the m-OH, ankD catalyzes the attachment of L-homoserine, and ankE ligates citrate to the ankD product to yield NK13650 B. The O-methyltransferase ankF is responsible for methylation of the C-17 phenol group of NK13650 B to produce NK13650 D. Amidation of NK13650 D with L-Asp by ankG then leads to the production of NK13650 C, whereas amidation of NK13650 B produces NK13650 A. The sequence is that of ATP-grasp enzyme ankG from Aspergillus thermomutatus (Neosartorya pseudofischeri).